A 343-amino-acid chain; its full sequence is Cytosolic Fe-S cluster assembly factor CFD1 (343 aa).

15–22 (GKGGVGKS) lines the ATP pocket. Composition is skewed to polar residues over residues 80-91 (PSSDGLNGSQRA) and 99-110 (ESSSSTVETAPQ). Positions 80 to 110 (PSSDGLNGSQRANKPDDSNESSSSTVETAPQ) are disordered. 2 residues coordinate [4Fe-4S] cluster: cysteine 241 and cysteine 244.

It belongs to the Mrp/NBP35 ATP-binding proteins family. NUBP2/CFD1 subfamily. In terms of assembly, heterotetramer of 2 NBP35 and 2 CFD1 chains. The cofactor is [4Fe-4S] cluster.

The protein localises to the cytoplasm. Its function is as follows. Component of the cytosolic iron-sulfur (Fe/S) protein assembly (CIA) machinery. Required for maturation of extramitochondrial Fe-S proteins. The NBP35-CFD1 heterotetramer forms a Fe-S scaffold complex, mediating the de novo assembly of an Fe-S cluster and its transfer to target apoproteins. The protein is Cytosolic Fe-S cluster assembly factor CFD1 of Coccidioides immitis (strain RS) (Valley fever fungus).